We begin with the raw amino-acid sequence, 85 residues long: uncharacterized protein (85 aa).

Helical transmembrane passes span 12-34 (ICLSVVTFSTSYSLDAGVVVLAF) and 49-71 (IPEFLWVTWQSFIKVLSLLNGFV).

The protein localises to the cell membrane. This is an uncharacterized protein from Archaeoglobus fulgidus (strain ATCC 49558 / DSM 4304 / JCM 9628 / NBRC 100126 / VC-16).